Consider the following 167-residue polypeptide: NAD(P)H-quinone oxidoreductase subunit I, chloroplastic (167 aa).

4Fe-4S ferredoxin-type domains follow at residues 55 to 84 (GRIH…VDWK) and 95 to 124 (LNYS…MTEE). Residues cysteine 64, cysteine 67, cysteine 70, cysteine 74, cysteine 104, cysteine 107, cysteine 110, and cysteine 114 each contribute to the [4Fe-4S] cluster site.

It belongs to the complex I 23 kDa subunit family. In terms of assembly, NDH is composed of at least 16 different subunits, 5 of which are encoded in the nucleus. [4Fe-4S] cluster is required as a cofactor.

It localises to the plastid. It is found in the chloroplast thylakoid membrane. The catalysed reaction is a plastoquinone + NADH + (n+1) H(+)(in) = a plastoquinol + NAD(+) + n H(+)(out). It carries out the reaction a plastoquinone + NADPH + (n+1) H(+)(in) = a plastoquinol + NADP(+) + n H(+)(out). Its function is as follows. NDH shuttles electrons from NAD(P)H:plastoquinone, via FMN and iron-sulfur (Fe-S) centers, to quinones in the photosynthetic chain and possibly in a chloroplast respiratory chain. The immediate electron acceptor for the enzyme in this species is believed to be plastoquinone. Couples the redox reaction to proton translocation, and thus conserves the redox energy in a proton gradient. The protein is NAD(P)H-quinone oxidoreductase subunit I, chloroplastic of Draba nemorosa (Woodland whitlowgrass).